The following is a 629-amino-acid chain: tRNA uridine 5-carboxymethylaminomethyl modification enzyme MnmG (629 aa).

13 to 18 serves as a coordination point for FAD; the sequence is GGGHAG. 273 to 287 serves as a coordination point for NAD(+); the sequence is GPRYCPSIEDKIHRF.

It belongs to the MnmG family. Homodimer. Heterotetramer of two MnmE and two MnmG subunits. FAD is required as a cofactor.

It is found in the cytoplasm. In terms of biological role, NAD-binding protein involved in the addition of a carboxymethylaminomethyl (cmnm) group at the wobble position (U34) of certain tRNAs, forming tRNA-cmnm(5)s(2)U34. In Shewanella amazonensis (strain ATCC BAA-1098 / SB2B), this protein is tRNA uridine 5-carboxymethylaminomethyl modification enzyme MnmG.